Reading from the N-terminus, the 21-residue chain is Major outer membrane protein (21 aa).

Disulfide bond interactions within and between MOMP molecules and other components form high molecular-weight oligomers.

The protein resides in the cell outer membrane. In terms of biological role, structural rigidity of the outer membrane of elementary bodies and porin forming, permitting diffusion of solutes through the intracellular reticulate body membrane. The polypeptide is Major outer membrane protein (Actinobacillus equuli).